Consider the following 329-residue polypeptide: UDP-2,3-diacylglucosamine pyrophosphatase LpxG (329 aa).

A helical transmembrane segment spans residues 2-24 (FVSVGITASLTTILAAPVLTWVW). A divalent metal cation is bound by residues Asp59, His61, Asp91, Asn123, His257, and His259.

It belongs to the metallophosphoesterase superfamily. LpxG family. Requires Mn(2+) as cofactor.

It is found in the cell inner membrane. It carries out the reaction UDP-2,3-diacyl-alpha-D-glucosamine + H2O = 2,3-diacyl-alpha-D-glucosaminyl 1-phosphate + UMP + 2 H(+). Its pathway is glycolipid biosynthesis; lipid IV(A) biosynthesis. In terms of biological role, hydrolyzes the pyrophosphate bond of UDP-2,3-diacylglucosamine to form 2,3-diacylglucosamine 1-phosphate (lipid X) and UMP by catalyzing the attack of water at the alpha-P atom. Involved in the biosynthesis of lipid A, a phosphorylated glycolipid that anchors the lipooligosaccharide (LOS) to the outer membrane of the cell. Can functionally complement lpxH deficiency in E.coli. Overexpression of LpxG results in toxic accumulation of lipid X and profoundly reduces the infectivity of C.trachomatis. Can utilize UDP-2-N,3-O-bis((3R)-3-hydroxytetradecanoyl)-alpha-D-glucosamine as substrate in vitro, but the substrate is likely UDP-2-N-((3R)-3-hydroxyicosanoyl),3-O-(tetradecanoyl)-alpha-D-glucosamine in vivo. In Chlamydia trachomatis serovar D (strain ATCC VR-885 / DSM 19411 / UW-3/Cx), this protein is UDP-2,3-diacylglucosamine pyrophosphatase LpxG.